The chain runs to 350 residues: Ookinete surface protein PIMMS43 (350 aa).

Positions M1–G24 are cleaved as a signal peptide. The helical transmembrane segment at N330–L350 threads the bilayer.

As to quaternary structure, forms multimers, perhaps with an unknown protein(s).

It localises to the membrane. Its function is as follows. Involved in ookinete evasion of the mosquito complement-like response, oocyst maturation, sporozoite development and infectivity. The chain is Ookinete surface protein PIMMS43 from Plasmodium berghei (strain Anka).